A 344-amino-acid polypeptide reads, in one-letter code: Phenylalanine--tRNA ligase alpha subunit (344 aa).

Position 269 (Glu-269) interacts with Mg(2+).

The protein belongs to the class-II aminoacyl-tRNA synthetase family. Phe-tRNA synthetase alpha subunit type 1 subfamily. In terms of assembly, tetramer of two alpha and two beta subunits. Mg(2+) serves as cofactor.

The protein resides in the cytoplasm. The enzyme catalyses tRNA(Phe) + L-phenylalanine + ATP = L-phenylalanyl-tRNA(Phe) + AMP + diphosphate + H(+). The polypeptide is Phenylalanine--tRNA ligase alpha subunit (Ralstonia pickettii (strain 12J)).